We begin with the raw amino-acid sequence, 276 residues long: Thiazole synthase (276 aa).

Catalysis depends on Lys117, which acts as the Schiff-base intermediate with DXP. Residues Gly178, 204-205 (AG), and 226-227 (NT) each bind 1-deoxy-D-xylulose 5-phosphate.

Belongs to the ThiG family. Homotetramer. Forms heterodimers with either ThiH or ThiS.

It localises to the plastid. Its subcellular location is the chloroplast. The catalysed reaction is [ThiS sulfur-carrier protein]-C-terminal-Gly-aminoethanethioate + 2-iminoacetate + 1-deoxy-D-xylulose 5-phosphate = [ThiS sulfur-carrier protein]-C-terminal Gly-Gly + 2-[(2R,5Z)-2-carboxy-4-methylthiazol-5(2H)-ylidene]ethyl phosphate + 2 H2O + H(+). It participates in cofactor biosynthesis; thiamine diphosphate biosynthesis. Catalyzes the rearrangement of 1-deoxy-D-xylulose 5-phosphate (DXP) to produce the thiazole phosphate moiety of thiamine. Sulfur is provided by the thiocarboxylate moiety of the carrier protein ThiS. In vitro, sulfur can be provided by H(2)S. The sequence is that of Thiazole synthase from Gracilaria tenuistipitata var. liui (Red alga).